A 147-amino-acid polypeptide reads, in one-letter code: Hemoglobin subunit delta (147 aa).

In terms of domain architecture, Globin spans Asn-3–His-147. Heme b contacts are provided by His-64 and His-93.

The protein belongs to the globin family. Heterotetramer of two delta chains and two alpha chains. As to expression, red blood cells.

The protein is Hemoglobin subunit delta (HBD) of Elephas maximus (Indian elephant).